We begin with the raw amino-acid sequence, 984 residues long: Putative formate dehydrogenase SH0748 (984 aa).

The region spanning 3–79 (EHLIVTLDGT…PMTVNTQNND (77 aa)) is the 2Fe-2S ferredoxin-type domain. Positions 37, 48, 51, and 63 each coordinate [2Fe-2S] cluster. Residues 79 to 119 (DVKASQKEALDRILEKHMLYCTVCDYNNGDCEIHNAMDAWG) form the 4Fe-4S His(Cys)3-ligated-type domain. [4Fe-4S] cluster contacts are provided by His95, Cys99, Cys102, Cys109, Cys147, Cys150, Cys153, Cys157, Cys190, Cys193, Cys196, Cys200, Cys264, Cys267, Cys271, and Cys299. 4Fe-4S ferredoxin-type domains are found at residues 138–165 (PFYR…VNET) and 181–211 (NDVP…VNME). The interval 252–984 (MRKERIKKTK…YVFPGNVVDK (733 aa)) is formate dehydrogenase. Positions 257-313 (IKKTKTVCTYCGVGCSFDVWTKDREVLKVQPSHDSPANKIATCVKGKFSWGHINSDQ) constitute a 4Fe-4S Mo/W bis-MGD-type domain.

It in the C-terminal section; belongs to the prokaryotic molybdopterin-containing oxidoreductase family. Requires [2Fe-2S] cluster as cofactor. [4Fe-4S] cluster serves as cofactor. The cofactor is Mo-bis(molybdopterin guanine dinucleotide).

It carries out the reaction formate + NAD(+) = CO2 + NADH. The protein is Putative formate dehydrogenase SH0748 of Staphylococcus haemolyticus (strain JCSC1435).